The sequence spans 1227 residues: Beta-alanyl-bioamine nonribosomal peptide synthetase (1227 aa).

Positions methionine 1 to leucine 850 are adenylation. In terms of domain architecture, Carrier spans serine 851–glutamate 931. Serine 892 carries the O-(pantetheine 4'-phosphoryl)serine modification. A condensation region spans residues serine 932–serine 1227.

Belongs to the NRP synthetase family. The cofactor is pantetheine 4'-phosphate. In terms of tissue distribution, in virgin and paired males, bilaterally expressed in some cells in the head. During pairing, expressed throughout the ventral side of the body probably in ciliated neurons. Highly expressed in virgin females in cells throughout the body and only weakly expressed in sexually mature females. In virgin females, expressed in some cells in the head and on the dorsal surface and lateral edges of body.

It carries out the reaction tryptamine + beta-alanine + ATP = beta-alanyl-tryptamine + AMP + diphosphate + H(+). The catalysed reaction is beta-alanine + ATP + H(+) = beta-alanyl-5'-AMP + diphosphate. It catalyses the reaction beta-alanyl-5'-AMP + holo-[peptidyl-carrier protein] = beta-alanyl-[peptidyl-carrier protein] + AMP + H(+). The enzyme catalyses beta-alanyl-[peptidyl-carrier protein] + tryptamine = beta-alanyl-tryptamine + holo-[peptidyl-carrier protein] + H(+). Catalyzes the condensation of beta-alanine with tryptamine to form beta-alanyl-tryptamine (BATT). Beta-alanyl-tryptamine is an essential pheromone produced by the male that stimulates female sexual development during pairing. The sequence is that of Beta-alanyl-bioamine nonribosomal peptide synthetase from Schistosoma mansoni (Blood fluke).